We begin with the raw amino-acid sequence, 832 residues long: WD repeat-containing protein 75 (832 aa).

13 WD repeats span residues 4–43 (KTDI…KVYS), 47–86 (EEWL…KLWD), 90–134 (GILI…QLVA), 148–187 (KELS…YFFR), 196–233 (LKAT…RLWR), 239–278 (KEYT…VQWQ), 281–320 (DMSK…SIIE), 326–364 (SGLI…QFYS), 378–425 (QQEY…KLWA), 432–474 (SFVL…KAWC), 485–523 (YWSC…TLWS), 527–567 (WELL…CCWN), and 572–609 (ALEW…FVFK). 2 disordered regions span residues 704–723 (QHKL…HTQG) and 759–811 (VREE…AQER). Over residues 764–785 (DSSEQEMDSEKEEEESEEEMEA) the composition is skewed to acidic residues. A compositionally biased stretch (basic and acidic residues) spans 799–811 (DEQKPKLSKAQER).

As to quaternary structure, component of the proposed t-UTP subcomplex of the ribosomal small subunit (SSU) processome. SSU processome is composed of more than 70 proteins and the RNA chaperone small nucleolar RNA (snoRNA) U3.

It is found in the nucleus. Its subcellular location is the nucleolus. Functionally, ribosome biogenesis factor. Part of the small subunit (SSU) processome, first precursor of the small eukaryotic ribosomal subunit. During the assembly of the SSU processome in the nucleolus, many ribosome biogenesis factors, an RNA chaperone and ribosomal proteins associate with the nascent pre-rRNA and work in concert to generate RNA folding, modifications, rearrangements and cleavage as well as targeted degradation of pre-ribosomal RNA by the RNA exosome. Involved in nucleolar processing of pre-18S ribosomal RNA. Required for optimal pre-ribosomal RNA transcription by RNA polymerase I. This chain is WD repeat-containing protein 75 (wdr75), found in Danio rerio (Zebrafish).